The sequence spans 445 residues: Clusterin (445 aa).

An N-terminal signal peptide occupies residues 1-22 (MMKTLLLLVGLLLTWDNGRVLG). Positions 78–81 (KKKK) match the Nuclear localization signal motif. N-linked (GlcNAc...) asparagine glycosylation is found at asparagine 86 and asparagine 103. 5 cysteine pairs are disulfide-bonded: cysteine 102-cysteine 309, cysteine 113-cysteine 301, cysteine 116-cysteine 298, cysteine 121-cysteine 291, and cysteine 129-cysteine 281. Serine 133 is modified (phosphoserine). N-linked (GlcNAc...) asparagine glycosylation is found at asparagine 145, asparagine 277, asparagine 287, asparagine 350, and asparagine 370. Position 392 is a phosphoserine (serine 392). Positions 439–443 (RQKHR) match the Nuclear localization signal motif.

It belongs to the clusterin family. As to quaternary structure, antiparallel disulfide-linked heterodimer of an alpha chain and a beta chain. Self-associates and forms higher oligomers. Interacts with a broad range of misfolded proteins, including APP, APOC2 and LYZ. Slightly acidic pH promotes interaction with misfolded proteins. Forms high-molecular weight oligomers upon interaction with misfolded proteins. Interacts with APOA1, LRP2, CLUAP1 and PON1. Interacts with the complement membrane attack complex. Interacts (via alpha chain) with XRCC6. Interacts with SYVN1, COMMD1, BTRC, CUL1 and with ubiquitin and SCF (SKP1-CUL1-F-box protein) E3 ubiquitin-protein ligase complexes. Interacts (via alpha chain) with BAX in stressed cells, where BAX undergoes a conformation change leading to association with the mitochondrial membrane. Does not interact with BAX in unstressed cells. Found in a complex with LTF, CLU, EPPIN and SEMG1. Interacts (immaturely glycosylated pre-secreted form) with HSPA5; this interaction promotes CLU stability and facilitates stress-induced CLU retrotranslocation from the secretory pathway to the mitochondria, thereby reducing stress-induced apoptosis by stabilizing mitochondrial membrane integrity. Interacts with BCL2L1; this interaction releases and activates BAX and promotes cell death. Interacts with TGFBR2 and ACVR1. Interacts (secreted form) with STMN3; this interaction may act as an important modulator during neuronal differentiation. Interacts with VLDLR and LRP8. In terms of processing, proteolytically cleaved on its way through the secretory system, probably within the Golgi lumen. Proteolytic cleavage is not necessary for its chaperone activity. All non-secreted forms are not proteolytically cleaved. Chaperone activity of uncleaved forms is dependent on a non-reducing environment. This proteolytic maturation is disulfide bond formation dependent. Polyubiquitinated, leading to proteasomal degradation. Under cellular stress, the intracellular level of cleaved form is reduced due to proteasomal degradation. Post-translationally, heavily N-glycosylated. About 30% of the protein mass is comprised of complex N-linked carbohydrate. Endoplasmic reticulum (ER) stress induces changes in glycosylation status and increases level of hypoglycosylated forms. Core carbohydrates are essential for chaperone activity. Non-secreted forms are hypoglycosylated or unglycosylated.

The protein localises to the secreted. The protein resides in the nucleus. It is found in the cytoplasm. It localises to the mitochondrion membrane. Its subcellular location is the cytosol. The protein localises to the microsome. The protein resides in the endoplasmic reticulum. It is found in the mitochondrion. It localises to the perinuclear region. Its subcellular location is the cytoplasmic vesicle. The protein localises to the secretory vesicle. The protein resides in the chromaffin granule. Functions as extracellular chaperone that prevents aggregation of non native proteins. Prevents stress-induced aggregation of blood plasma proteins. Inhibits formation of amyloid fibrils by APP, APOC2, B2M, CALCA, CSN3, SNCA and aggregation-prone LYZ variants (in vitro). Does not require ATP. Maintains partially unfolded proteins in a state appropriate for subsequent refolding by other chaperones, such as HSPA8/HSC70. Does not refold proteins by itself. Binding to cell surface receptors triggers internalization of the chaperone-client complex and subsequent lysosomal or proteasomal degradation. When secreted, protects cells against apoptosis and against cytolysis by complement: inhibits assembly of the complement membrane attack complex (MAC) by preventing polymerization of C9 pore component of the MAC complex. Intracellular forms interact with ubiquitin and SCF (SKP1-CUL1-F-box protein) E3 ubiquitin-protein ligase complexes and promote the ubiquitination and subsequent proteasomal degradation of target proteins. Promotes proteasomal degradation of COMMD1 and IKBKB. Modulates NF-kappa-B transcriptional activity. Following stress, promotes apoptosis. Inhibits apoptosis when associated with the mitochondrial membrane by interference with BAX-dependent release of cytochrome c into the cytoplasm. Plays a role in the regulation of cell proliferation. An intracellular form suppresses stress-induced apoptosis by stabilizing mitochondrial membrane integrity through interaction with HSPA5. Secreted form does not affect caspase or BAX-mediated intrinsic apoptosis and TNF-induced NF-kappa-B-activity. Secreted form act as an important modulator during neuronal differentiation through interaction with STMN3. Plays a role in the clearance of immune complexes that arise during cell injury. This is Clusterin (CLU) from Canis lupus familiaris (Dog).